We begin with the raw amino-acid sequence, 276 residues long: 3-methyl-2-oxobutanoate hydroxymethyltransferase (276 aa).

2 residues coordinate Mg(2+): Asp-44 and Asp-83. 3-methyl-2-oxobutanoate is bound by residues 44 to 45, Asp-83, and Lys-112; that span reads DS. Glu-114 is a Mg(2+) binding site. Catalysis depends on Glu-180, which acts as the Proton acceptor. The interval 256 to 276 is disordered; the sequence is PTEAQSSRMKPDELSRALNAE.

This sequence belongs to the PanB family. As to quaternary structure, homodecamer; pentamer of dimers. Mg(2+) serves as cofactor.

The protein localises to the cytoplasm. It carries out the reaction 3-methyl-2-oxobutanoate + (6R)-5,10-methylene-5,6,7,8-tetrahydrofolate + H2O = 2-dehydropantoate + (6S)-5,6,7,8-tetrahydrofolate. It functions in the pathway cofactor biosynthesis; (R)-pantothenate biosynthesis; (R)-pantoate from 3-methyl-2-oxobutanoate: step 1/2. Functionally, catalyzes the reversible reaction in which hydroxymethyl group from 5,10-methylenetetrahydrofolate is transferred onto alpha-ketoisovalerate to form ketopantoate. This is 3-methyl-2-oxobutanoate hydroxymethyltransferase from Gluconacetobacter diazotrophicus (strain ATCC 49037 / DSM 5601 / CCUG 37298 / CIP 103539 / LMG 7603 / PAl5).